The chain runs to 200 residues: Ephrin-A2 (200 aa).

The first 22 residues, 1 to 22 (MPRWEAAALLAAIVGVCVWSDD), serve as a signal peptide directing secretion. One can recognise an Ephrin RBD domain in the interval 28–161 (SDRYAVYWNR…KLKVYVRPTN (134 aa)). N-linked (GlcNAc...) asparagine glycosylation is present at asparagine 36. 2 disulfides stabilise this stretch: cysteine 61-cysteine 101 and cysteine 89-cysteine 150. Asparagine 161 and asparagine 175 each carry an N-linked (GlcNAc...) asparagine glycan. Asparagine 175 carries the GPI-anchor amidated asparagine lipid modification. The propeptide at 176-200 (NSCCSLAVPRAVLVAAPVFWTLLGS) is removed in mature form.

It belongs to the ephrin family. As to quaternary structure, binds to the receptor tyrosine kinases EPHA3, EPHA4 and EPHA5. Interacts with EPHA8; activates EPHA8. Expressed in a gradient across the tectum being more strongly expressed at the posterior pole.

It localises to the cell membrane. Its function is as follows. Cell surface GPI-bound ligand for Eph receptors, a family of receptor tyrosine kinases which are crucial for migration, repulsion and adhesion during neuronal, vascular and epithelial development. Binds promiscuously Eph receptors residing on adjacent cells, leading to contact-dependent bidirectional signaling into neighboring cells. The signaling pathway downstream of the receptor is referred to as forward signaling while the signaling pathway downstream of the ephrin ligand is referred to as reverse signaling. With the EPHA2 receptor may play a role in bone remodeling through regulation of osteoclastogenesis and osteoblastogenesis. This chain is Ephrin-A2 (EFNA2), found in Gallus gallus (Chicken).